A 492-amino-acid polypeptide reads, in one-letter code: Probable endopolygalacturonase D (492 aa).

The N-terminal stretch at 1–16 (MKRSALILSFLPLVFG) is a signal peptide. A disulfide bond links cysteine 151 and cysteine 166. PbH1 repeat units follow at residues 216–238 (GTSV…AYWD), 258–280 (MYNS…EIES), 281–319 (TEHL…DIKE), and 320–341 (SSYF…AVTS). N-linked (GlcNAc...) asparagine glycosylation occurs at asparagine 292. Aspartate 334 functions as the Proton donor in the catalytic mechanism. Cysteine 336 and cysteine 352 are oxidised to a cystine. Histidine 356 is an active-site residue. PbH1 repeat units follow at residues 371–392 (VNGV…RIKT), 400–422 (VYNI…DVQQ), and 434–478 (TNGV…SITG). Residues asparagine 407 and asparagine 441 are each glycosylated (N-linked (GlcNAc...) asparagine). 2 cysteine pairs are disulfide-bonded: cysteine 461-cysteine 466 and cysteine 484-cysteine 491.

The protein belongs to the glycosyl hydrolase 28 family.

It is found in the secreted. The enzyme catalyses (1,4-alpha-D-galacturonosyl)n+m + H2O = (1,4-alpha-D-galacturonosyl)n + (1,4-alpha-D-galacturonosyl)m.. Involved in maceration and soft-rotting of plant tissue. Hydrolyzes the 1,4-alpha glycosidic bonds of de-esterified pectate in the smooth region of the plant cell wall. The sequence is that of Probable endopolygalacturonase D (pgaD) from Aspergillus oryzae (strain ATCC 42149 / RIB 40) (Yellow koji mold).